We begin with the raw amino-acid sequence, 552 residues long: CCR4-NOT transcription complex subunit 6 (552 aa).

LRR repeat units lie at residues His52–Leu73, Asn75–Met96, Ser98–Phe120, and Gln121–Pro143. The tract at residues Leu153 to Arg552 is nuclease domain. Residue Glu235 participates in Mg(2+) binding. The substrate site is built by Glu235, Glu271, His356, and Pro361. Asp407 lines the Mg(2+) pocket. The active-site Proton donor/acceptor is the Asp407. 3 residues coordinate substrate: Asn409, Asn476, and Phe481.

The protein belongs to the CCR4/nocturin family. Subunit of the CCR4-NOT core complex. Requires Mg(2+) as cofactor.

The protein localises to the cytoplasm. The protein resides in the nucleus. It catalyses the reaction Exonucleolytic cleavage of poly(A) to 5'-AMP.. Poly(A) nuclease involved in mRNA decay. Has 3'-5' RNase activity. The CCR4-NOT complex functions as a general transcription regulation complex. Enhances ligand-dependent transcriptional activity of nuclear hormone receptors. This chain is CCR4-NOT transcription complex subunit 6 (cnot6), found in Xenopus laevis (African clawed frog).